The following is a 380-amino-acid chain: Cytochrome b (380 aa).

The next 4 helical transmembrane spans lie at 34 to 54 (FGSL…LLAM), 78 to 99 (WLLH…FLHI), 114 to 134 (WNTG…GYVL), and 179 to 199 (FFAL…IHLM). Residues histidine 84 and histidine 98 each coordinate heme b. Residues histidine 183 and histidine 197 each coordinate heme b. Histidine 202 is a binding site for a ubiquinone. Helical transmembrane passes span 227–247 (IKDI…TLFS), 289–309 (LGGV…PFLH), 321–341 (LSQT…WVGS), and 348–368 (FIII…ILFP).

It belongs to the cytochrome b family. As to quaternary structure, the cytochrome bc1 complex contains 11 subunits: 3 respiratory subunits (MT-CYB, CYC1 and UQCRFS1), 2 core proteins (UQCRC1 and UQCRC2) and 6 low-molecular weight proteins (UQCRH/QCR6, UQCRB/QCR7, UQCRQ/QCR8, UQCR10/QCR9, UQCR11/QCR10 and a cleavage product of UQCRFS1). This cytochrome bc1 complex then forms a dimer. Requires heme b as cofactor.

The protein resides in the mitochondrion inner membrane. Its function is as follows. Component of the ubiquinol-cytochrome c reductase complex (complex III or cytochrome b-c1 complex) that is part of the mitochondrial respiratory chain. The b-c1 complex mediates electron transfer from ubiquinol to cytochrome c. Contributes to the generation of a proton gradient across the mitochondrial membrane that is then used for ATP synthesis. This Meleagris gallopavo (Wild turkey) protein is Cytochrome b (MT-CYB).